We begin with the raw amino-acid sequence, 535 residues long: Thermosome subunit gamma (535 aa).

The protein belongs to the TCP-1 chaperonin family. As to quaternary structure, forms a heterooligomeric complex of two stacked nine-membered rings; one of alpha and the other of beta subunits.

It is found in the cytoplasm. The enzyme catalyses ATP + H2O = ADP + phosphate + H(+). Molecular chaperone; binds unfolded polypeptides in vitro, and has a weak ATPase activity. This is Thermosome subunit gamma (thsC) from Saccharolobus shibatae (strain ATCC 51178 / DSM 5389 / JCM 8931 / NBRC 15437 / B12) (Sulfolobus shibatae).